Reading from the N-terminus, the 797-residue chain is Homoaconitase, mitochondrial (797 aa).

Residues 1-47 constitute a mitochondrion transit peptide; sequence MVARFVPSAMTVLVARRGLAMASTRRGWRGLAVNLKPAAGRQWRQAY. [4Fe-4S] cluster-binding residues include C404, C471, and C474.

This sequence belongs to the aconitase/IPM isomerase family. [4Fe-4S] cluster serves as cofactor.

The protein localises to the mitochondrion. It catalyses the reaction (2R,3S)-homoisocitrate = cis-homoaconitate + H2O. Its pathway is amino-acid biosynthesis; L-lysine biosynthesis via AAA pathway; L-alpha-aminoadipate from 2-oxoglutarate: step 3/5. Its function is as follows. Catalyzes the reversible hydration of cis-homoaconitate to (2R,3S)-homoisocitrate, a step in the alpha-aminoadipate pathway for lysine biosynthesis. The polypeptide is Homoaconitase, mitochondrial (LYS4) (Chaetomium globosum (strain ATCC 6205 / CBS 148.51 / DSM 1962 / NBRC 6347 / NRRL 1970) (Soil fungus)).